A 638-amino-acid polypeptide reads, in one-letter code: Threonine--tRNA ligase (638 aa).

In terms of domain architecture, TGS spans 1–61 (MPVVTLPDGS…EADAEVALVT (61 aa)). A catalytic region spans residues 242–533 (DHRKLGKALD…LTEHYAGQYP (292 aa)). Residues Cys-333, His-384, and His-510 each coordinate Zn(2+).

Belongs to the class-II aminoacyl-tRNA synthetase family. Homodimer. Zn(2+) is required as a cofactor.

It is found in the cytoplasm. The catalysed reaction is tRNA(Thr) + L-threonine + ATP = L-threonyl-tRNA(Thr) + AMP + diphosphate + H(+). Catalyzes the attachment of threonine to tRNA(Thr) in a two-step reaction: L-threonine is first activated by ATP to form Thr-AMP and then transferred to the acceptor end of tRNA(Thr). Also edits incorrectly charged L-seryl-tRNA(Thr). The chain is Threonine--tRNA ligase from Methylococcus capsulatus (strain ATCC 33009 / NCIMB 11132 / Bath).